The chain runs to 218 residues: Thymidylate kinase (218 aa).

15–22 (GLDRSGKS) provides a ligand contact to ATP.

It belongs to the thymidylate kinase family.

It carries out the reaction dTMP + ATP = dTDP + ADP. Its pathway is pyrimidine metabolism; dTTP biosynthesis. Its function is as follows. Catalyzes the conversion of dTMP to dTDP. This chain is Thymidylate kinase, found in Caenorhabditis elegans.